A 377-amino-acid chain; its full sequence is Compound eye opsin BCRH1 (377 aa).

Over 1 to 53 the chain is Extracellular; the sequence is MANVTGPQMAFYGSGAATFGYPEGMTVADFVPDRVKHMVLDHWYNYPPVNPMW. N-linked (GlcNAc...) asparagine glycosylation is present at N3. The chain crosses the membrane as a helical span at residues 54–78; it reads HYLLGVVYLFLGVISIAGNGLVIYL. Over 79–90 the chain is Cytoplasmic; it reads YMKSQALKTPAN. A helical transmembrane segment spans residues 91–115; sequence MLIVNLALSDLIMLTTNFPPFCYNC. At 116–131 the chain is on the extracellular side; sequence FSGGRWMFSGTYCEIY. C128 and C205 are joined by a disulfide. A helical transmembrane segment spans residues 132-151; that stretch reads AALGAITGVCSIWTLCMISF. At 152 to 170 the chain is on the cytoplasmic side; sequence DRYNIICNGFNGPKLTQGK. A helical transmembrane segment spans residues 171-194; that stretch reads ATFMCGLAWVISVGWSLPPFFGWG. The Extracellular segment spans residues 195-218; the sequence is SYTLEGILDSCSYDYFTRDMNTIT. The chain crosses the membrane as a helical span at residues 219 to 246; sequence YNICIFIFDFFLPASVIVFSYVFIVKAI. The Cytoplasmic portion of the chain corresponds to 247–281; the sequence is FAHEAAMRAQAKKMNVTNLRSNEAETQRAEIRIAK. The chain crosses the membrane as a helical span at residues 282–305; it reads TALVNVSLWFICWTPYAAITIQGL. At 306 to 313 the chain is on the extracellular side; sequence LGNAEGIT. A helical transmembrane segment spans residues 314–338; it reads PLLTTLPALLAKSCSCYNPFVYAIS. Position 325 is an N6-(retinylidene)lysine (K325). Over 339 to 377 the chain is Cytoplasmic; the sequence is HPKFRLAITQHLPWFCVHEKDPNDVEENQSSNTQTQEKS.

The protein belongs to the G-protein coupled receptor 1 family. Opsin subfamily. Post-translationally, phosphorylated on some or all of the serine and threonine residues present in the C-terminal region. Expressed in all of the seven retinular cells (R1-R7) forming the main rhabdom in each ommatidium.

It localises to the membrane. Functionally, visual pigments are the light-absorbing molecules that mediate vision. They consist of an apoprotein, opsin, covalently linked to cis-retinal. This opsin produces visual pigments with maximal absorption in the blue-green region of the spectrum. This Hemigrapsus sanguineus (Asian shore crab) protein is Compound eye opsin BCRH1.